We begin with the raw amino-acid sequence, 156 residues long: Small ribosomal subunit protein uS7 (156 aa).

Belongs to the universal ribosomal protein uS7 family. Part of the 30S ribosomal subunit. Contacts proteins S9 and S11.

Its function is as follows. One of the primary rRNA binding proteins, it binds directly to 16S rRNA where it nucleates assembly of the head domain of the 30S subunit. Is located at the subunit interface close to the decoding center, probably blocks exit of the E-site tRNA. This chain is Small ribosomal subunit protein uS7, found in Bifidobacterium longum subsp. infantis (strain ATCC 15697 / DSM 20088 / JCM 1222 / NCTC 11817 / S12).